Reading from the N-terminus, the 369-residue chain is Serine/threonine-protein kinase srb10 (369 aa).

The Protein kinase domain occupies 5–319; the sequence is YKIIGFISSG…AKQALEHVFF (315 aa). ATP is bound by residues 11-19 and Lys-36; that span reads ISSGTYGKV. Asp-140 serves as the catalytic Proton acceptor.

This sequence belongs to the protein kinase superfamily. CMGC Ser/Thr protein kinase family. CDC2/CDKX subfamily. Component of the Cdk8 module of the Mediator complex. The Cdk8 module is composed of srb8, srb9, srb10 and srb11. Interacts with med17 and med18.

Its subcellular location is the nucleus. It catalyses the reaction L-seryl-[protein] + ATP = O-phospho-L-seryl-[protein] + ADP + H(+). It carries out the reaction L-threonyl-[protein] + ATP = O-phospho-L-threonyl-[protein] + ADP + H(+). The catalysed reaction is [DNA-directed RNA polymerase] + ATP = phospho-[DNA-directed RNA polymerase] + ADP + H(+). Catalytic component of the Cdk8 module/Srb8-11 module which is a regulatory module of the Mediator complex that regulates basal RNA polymerase II transcription. The Cdk8 module may sterically hinder the interaction between Mediator and RNA polymerase II leading to transcriptional repression of a subset of genes regulated by Mediator. The polypeptide is Serine/threonine-protein kinase srb10 (srb10) (Schizosaccharomyces pombe (strain 972 / ATCC 24843) (Fission yeast)).